Consider the following 70-residue polypeptide: uncharacterized protein (70 aa).

This is an uncharacterized protein from Vaccinia virus (strain Copenhagen) (VACV).